The primary structure comprises 100 residues: NADH-quinone oxidoreductase subunit K 2 (100 aa).

The next 3 membrane-spanning stretches (helical) occupy residues 2-22, 29-49, and 61-81; these read LAIENYLILSAILFAIGTIGV, IVIFMCIELMLNAVNLTFIAF, and FVFFVMTVAAAEAAVGLALMI.

Belongs to the complex I subunit 4L family. In terms of assembly, NDH-1 is composed of 14 different subunits. Subunits NuoA, H, J, K, L, M, N constitute the membrane sector of the complex.

The protein localises to the cell inner membrane. The catalysed reaction is a quinone + NADH + 5 H(+)(in) = a quinol + NAD(+) + 4 H(+)(out). Its function is as follows. NDH-1 shuttles electrons from NADH, via FMN and iron-sulfur (Fe-S) centers, to quinones in the respiratory chain. The immediate electron acceptor for the enzyme in this species is believed to be ubiquinone. Couples the redox reaction to proton translocation (for every two electrons transferred, four hydrogen ions are translocated across the cytoplasmic membrane), and thus conserves the redox energy in a proton gradient. The polypeptide is NADH-quinone oxidoreductase subunit K 2 (Geobacter sp. (strain M21)).